The chain runs to 336 residues: Dihydroorotate dehydrogenase (quinone) (336 aa).

FMN-binding positions include 62 to 66 (AGMDK) and threonine 86. Substrate is bound at residue lysine 66. A substrate-binding site is contributed by 111–115 (NRMGF). Positions 139 and 172 each coordinate FMN. Asparagine 172 provides a ligand contact to substrate. Residue serine 175 is the Nucleophile of the active site. A substrate-binding site is contributed by asparagine 177. Positions 217 and 245 each coordinate FMN. 246 to 247 (NT) is a substrate binding site. FMN contacts are provided by residues glycine 268, glycine 297, and 318-319 (YS).

The protein belongs to the dihydroorotate dehydrogenase family. Type 2 subfamily. As to quaternary structure, monomer. The cofactor is FMN.

It is found in the cell membrane. The enzyme catalyses (S)-dihydroorotate + a quinone = orotate + a quinol. Its pathway is pyrimidine metabolism; UMP biosynthesis via de novo pathway; orotate from (S)-dihydroorotate (quinone route): step 1/1. Catalyzes the conversion of dihydroorotate to orotate with quinone as electron acceptor. The polypeptide is Dihydroorotate dehydrogenase (quinone) (Buchnera aphidicola subsp. Schizaphis graminum (strain Sg)).